The chain runs to 160 residues: Ribonuclease H (160 aa).

The region spanning 1 to 157 is the RNase H type-1 domain; the sequence is MNIEIYTDGA…CDRLAVEACQ (157 aa). Residues aspartate 8, glutamate 49, aspartate 85, and aspartate 149 each coordinate Mg(2+).

This sequence belongs to the RNase H family. As to quaternary structure, monomer. Mg(2+) serves as cofactor.

It is found in the cytoplasm. The catalysed reaction is Endonucleolytic cleavage to 5'-phosphomonoester.. Functionally, endonuclease that specifically degrades the RNA of RNA-DNA hybrids. This chain is Ribonuclease H, found in Treponema denticola (strain ATCC 35405 / DSM 14222 / CIP 103919 / JCM 8153 / KCTC 15104).